The primary structure comprises 388 residues: GTPase Obg (388 aa).

One can recognise an Obg domain in the interval 1–159 (MKFVDEAVIR…RSLKLELLLL (159 aa)). In terms of domain architecture, OBG-type G spans 160–333 (ADVGLLGMPN…LATKLLDFIQ (174 aa)). Residues 166–173 (GMPNAGKS), 191–195 (FTTLV), 213–216 (DIPG), 283–286 (NKAD), and 314–316 (SAY) each bind GTP. Positions 173 and 193 each coordinate Mg(2+).

It belongs to the TRAFAC class OBG-HflX-like GTPase superfamily. OBG GTPase family. Monomer. The cofactor is Mg(2+).

It is found in the cytoplasm. Functionally, an essential GTPase which binds GTP, GDP and possibly (p)ppGpp with moderate affinity, with high nucleotide exchange rates and a fairly low GTP hydrolysis rate. Plays a role in control of the cell cycle, stress response, ribosome biogenesis and in those bacteria that undergo differentiation, in morphogenesis control. The chain is GTPase Obg from Shewanella sp. (strain MR-4).